The following is a 151-amino-acid chain: Small ribosomal subunit protein uS11 (151 aa).

The interval 131-151 is disordered; the sequence is DVTPVPSDSTRRKGGRRGRRL. The segment covering 142–151 has biased composition (basic residues); the sequence is RKGGRRGRRL.

Belongs to the universal ribosomal protein uS11 family.

The chain is Small ribosomal subunit protein uS11 from Bombyx mori (Silk moth).